Here is an 87-residue protein sequence, read N- to C-terminus: Putative regulatory protein syc0519_c (87 aa).

Belongs to the RemA family.

This is Putative regulatory protein syc0519_c from Synechococcus sp. (strain ATCC 27144 / PCC 6301 / SAUG 1402/1) (Anacystis nidulans).